A 73-amino-acid chain; its full sequence is Gas vesicle protein M2 (73 aa).

The protein belongs to the gas vesicle GvpA family. In terms of assembly, gvpF to GvpM interact with each other in vitro, and may form multi-subunit complex(es). Might interact with GvpA.

It is found in the gas vesicle. Proteins GvpF to GvpM might be involved in nucleating gas vesicle formation. A minor component of the gas vesicle. Gas vesicles are hollow, gas filled proteinaceous nanostructures found in several microbial planktonic microorganisms. They allow positioning of halobacteria at the optimal depth for growth in the poorly aerated, shallow brine pools of their habitat. Functionally, expression of 2 c-vac DNA fragments containing 2 divergently transcribed regions (gvpE-gvpF-gvpG-gvpH-gvpI-gvpJ-gvpK-gvpL-gvpM and gvpA-gvpC-gvpN-gvpO) allows H.volcanii to produce gas vesicles. This Halobacterium salinarum (strain ATCC 700922 / JCM 11081 / NRC-1) (Halobacterium halobium) protein is Gas vesicle protein M2.